The chain runs to 292 residues: Phosphoribosylaminoimidazole-succinocarboxamide synthase (292 aa).

Belongs to the SAICAR synthetase family.

It carries out the reaction 5-amino-1-(5-phospho-D-ribosyl)imidazole-4-carboxylate + L-aspartate + ATP = (2S)-2-[5-amino-1-(5-phospho-beta-D-ribosyl)imidazole-4-carboxamido]succinate + ADP + phosphate + 2 H(+). It participates in purine metabolism; IMP biosynthesis via de novo pathway; 5-amino-1-(5-phospho-D-ribosyl)imidazole-4-carboxamide from 5-amino-1-(5-phospho-D-ribosyl)imidazole-4-carboxylate: step 1/2. In Thermodesulfovibrio yellowstonii (strain ATCC 51303 / DSM 11347 / YP87), this protein is Phosphoribosylaminoimidazole-succinocarboxamide synthase.